The sequence spans 396 residues: Elongation factor Tu (396 aa).

In terms of domain architecture, tr-type G spans 10–205 (KPHVNIGTIG…AVDESIPDPV (196 aa)). The segment at 19-26 (GHVDHGKT) is G1. GTP is bound at residue 19-26 (GHVDHGKT). T26 serves as a coordination point for Mg(2+). The G2 stretch occupies residues 62 to 66 (GITIN). Positions 83-86 (DAPG) are G3. GTP-binding positions include 83-87 (DAPGH) and 138-141 (NKAD). A G4 region spans residues 138–141 (NKAD). The tract at residues 175 to 177 (SAL) is G5.

Belongs to the TRAFAC class translation factor GTPase superfamily. Classic translation factor GTPase family. EF-Tu/EF-1A subfamily. In terms of assembly, monomer.

Its subcellular location is the cytoplasm. It carries out the reaction GTP + H2O = GDP + phosphate + H(+). In terms of biological role, GTP hydrolase that promotes the GTP-dependent binding of aminoacyl-tRNA to the A-site of ribosomes during protein biosynthesis. This chain is Elongation factor Tu, found in Mycolicibacterium vanbaalenii (strain DSM 7251 / JCM 13017 / BCRC 16820 / KCTC 9966 / NRRL B-24157 / PYR-1) (Mycobacterium vanbaalenii).